Reading from the N-terminus, the 303-residue chain is Ribonuclease HIII (303 aa).

The region spanning Trp89–Leu303 is the RNase H type-2 domain. Residues Asp95, Glu96, and Asp199 each contribute to the a divalent metal cation site.

The protein belongs to the RNase HII family. RnhC subfamily. It depends on Mn(2+) as a cofactor. Requires Mg(2+) as cofactor.

The protein localises to the cytoplasm. It catalyses the reaction Endonucleolytic cleavage to 5'-phosphomonoester.. Functionally, endonuclease that specifically degrades the RNA of RNA-DNA hybrids. This is Ribonuclease HIII from Leuconostoc mesenteroides subsp. mesenteroides (strain ATCC 8293 / DSM 20343 / BCRC 11652 / CCM 1803 / JCM 6124 / NCDO 523 / NBRC 100496 / NCIMB 8023 / NCTC 12954 / NRRL B-1118 / 37Y).